Here is a 465-residue protein sequence, read N- to C-terminus: Spermidine/putrescine import ATP-binding protein PotA (465 aa).

Polar residues predominate over residues 1–18; that stretch reads MTATSGARTSDARTSGAR. Residues 1-21 form a disordered region; the sequence is MTATSGARTSDARTSGARTSD. The region spanning 30–264 is the ABC transporter domain; sequence IELVGVAKDY…PRTRFVAGFI (235 aa). 66 to 73 serves as a coordination point for ATP; that stretch reads GPSGCGKS.

This sequence belongs to the ABC transporter superfamily. Spermidine/putrescine importer (TC 3.A.1.11.1) family. As to quaternary structure, the complex is composed of two ATP-binding proteins (PotA), two transmembrane proteins (PotB and PotC) and a solute-binding protein (PotD).

The protein resides in the cell membrane. The enzyme catalyses ATP + H2O + polyamine-[polyamine-binding protein]Side 1 = ADP + phosphate + polyamineSide 2 + [polyamine-binding protein]Side 1.. Part of the ABC transporter complex PotABCD involved in spermidine/putrescine import. Responsible for energy coupling to the transport system. The chain is Spermidine/putrescine import ATP-binding protein PotA from Frankia alni (strain DSM 45986 / CECT 9034 / ACN14a).